A 341-amino-acid chain; its full sequence is Phosphoribosylformylglycinamidine cyclo-ligase (341 aa).

It belongs to the AIR synthase family.

It localises to the cytoplasm. It catalyses the reaction 2-formamido-N(1)-(5-O-phospho-beta-D-ribosyl)acetamidine + ATP = 5-amino-1-(5-phospho-beta-D-ribosyl)imidazole + ADP + phosphate + H(+). The protein operates within purine metabolism; IMP biosynthesis via de novo pathway; 5-amino-1-(5-phospho-D-ribosyl)imidazole from N(2)-formyl-N(1)-(5-phospho-D-ribosyl)glycinamide: step 2/2. This Finegoldia magna (strain ATCC 29328 / DSM 20472 / WAL 2508) (Peptostreptococcus magnus) protein is Phosphoribosylformylglycinamidine cyclo-ligase.